The following is a 301-amino-acid chain: tRNA dimethylallyltransferase (301 aa).

8-15 (GATGTGKS) is an ATP binding site. A substrate-binding site is contributed by 10–15 (TGTGKS). The tract at residues 33–36 (DSMQ) is interaction with substrate tRNA.

Belongs to the IPP transferase family. As to quaternary structure, monomer. It depends on Mg(2+) as a cofactor.

It catalyses the reaction adenosine(37) in tRNA + dimethylallyl diphosphate = N(6)-dimethylallyladenosine(37) in tRNA + diphosphate. Functionally, catalyzes the transfer of a dimethylallyl group onto the adenine at position 37 in tRNAs that read codons beginning with uridine, leading to the formation of N6-(dimethylallyl)adenosine (i(6)A). The protein is tRNA dimethylallyltransferase of Tropheryma whipplei (strain Twist) (Whipple's bacillus).